The sequence spans 1997 residues: Otoferlin (1997 aa).

The 98-residue stretch at 1-98 (MALLIHLKTV…VEESHVEVTD (98 aa)) folds into the C2 1 domain. Topologically, residues 1–1963 (MALLIHLKTV…ARYFLWHTYR (1963 aa)) are cytoplasmic. The segment at 128-171 (WDDGDFLGDESLQEEEKDSQETDGLLPGSRPSSRPPGEKSFRRA) is disordered. Positions 129–145 (DDGDFLGDESLQEEEKD) are enriched in acidic residues. 2 consecutive C2 domains span residues 236–357 (KRSK…HKWA) and 400–531 (IEGN…FLPT). Positions 642-694 (NEVDGLSRPQRPRPRKEPGDEEEVDLIQNASDDEAGDAGDLASVSSTPPMRPQ) are disordered. The segment covering 660 to 678 (GDEEEVDLIQNASDDEAGD) has biased composition (acidic residues). Residues 792-821 (RERLKSCMRELENMGQQARMLRAQVKRHTV) are a coiled coil. C2 domains are found at residues 944–1069 (LHAF…PPRF) and 1115–1242 (DRGP…PSWN). Residues Asp976, Asp982, Asp1038, Asp1040, and Asp1046 each coordinate Ca(2+). Disordered stretches follow at residues 1299 to 1324 (AEEEKEKKKKKKGTAEEPEEEEPDES) and 1343 to 1405 (LRQQ…KPKI). Composition is skewed to acidic residues over residues 1314–1324 (EEPEEEEPDES) and 1352–1361 (DLEEKEEVDN). Residues 1370-1383 (KGKEKARAAKEEKK) are compositionally biased toward basic and acidic residues. The span at 1387-1396 (QSSGSGQGSE) shows a compositional bias: low complexity. C2 domains follow at residues 1464-1593 (LPED…ATCG) and 1714-1865 (DMPA…KQCT). Residues Asp1508, Asp1514, Asp1563, Asp1565, Asp1571, Asp1836, Ser1839, and Asp1842 each coordinate Ca(2+). The helical transmembrane segment at 1964–1984 (WLLLKLLLLLLLLLLLALFLY) threads the bilayer. The Extracellular portion of the chain corresponds to 1985–1997 (SVPGYLVKKILGA).

This sequence belongs to the ferlin family. As to quaternary structure, interacts with SNAP2; the interaction is direct. Interacts with STX1; the interaction is direct. Interacts with RAB8B. The cofactor is Ca(2+). As to expression, isoform 1 and isoform 3 are found in adult brain. Isoform 2 is expressed in the fetus and in adult brain, heart, placenta, skeletal muscle and kidney.

The protein resides in the cytoplasmic vesicle. Its subcellular location is the secretory vesicle. It localises to the synaptic vesicle membrane. The protein localises to the basolateral cell membrane. It is found in the endoplasmic reticulum membrane. The protein resides in the golgi apparatus membrane. Its subcellular location is the presynaptic cell membrane. It localises to the cell membrane. Functionally, key calcium ion sensor involved in the Ca(2+)-triggered synaptic vesicle-plasma membrane fusion and in the control of neurotransmitter release at these output synapses. Interacts in a calcium-dependent manner to the presynaptic SNARE proteins at ribbon synapses of cochlear inner hair cells (IHCs) to trigger exocytosis of neurotransmitter. Also essential to synaptic exocytosis in immature outer hair cells (OHCs). May also play a role within the recycling of endosomes. The sequence is that of Otoferlin (OTOF) from Homo sapiens (Human).